A 406-amino-acid polypeptide reads, in one-letter code: Cysteine desulfurase (406 aa).

N6-(pyridoxal phosphate)lysine is present on Lys226. Residue Cys364 is the Cysteine persulfide intermediate of the active site.

This sequence belongs to the class-V pyridoxal-phosphate-dependent aminotransferase family. Csd subfamily. Homodimer. Interacts with SufE and the SufBCD complex composed of SufB, SufC and SufD. The interaction with SufE is required to mediate the direct transfer of the sulfur atom from the S-sulfanylcysteine. Requires pyridoxal 5'-phosphate as cofactor.

The protein resides in the cytoplasm. It catalyses the reaction (sulfur carrier)-H + L-cysteine = (sulfur carrier)-SH + L-alanine. The enzyme catalyses L-selenocysteine + AH2 = hydrogenselenide + L-alanine + A + H(+). The protein operates within cofactor biosynthesis; iron-sulfur cluster biosynthesis. In terms of biological role, cysteine desulfurases mobilize the sulfur from L-cysteine to yield L-alanine, an essential step in sulfur metabolism for biosynthesis of a variety of sulfur-containing biomolecules. Component of the suf operon, which is activated and required under specific conditions such as oxidative stress and iron limitation. Acts as a potent selenocysteine lyase in vitro, that mobilizes selenium from L-selenocysteine. Selenocysteine lyase activity is however unsure in vivo. The protein is Cysteine desulfurase of Escherichia coli O8 (strain IAI1).